A 103-amino-acid polypeptide reads, in one-letter code: Integration host factor subunit alpha (103 aa).

This sequence belongs to the bacterial histone-like protein family. Heterodimer of an alpha and a beta chain.

Its function is as follows. This protein is one of the two subunits of integration host factor, a specific DNA-binding protein that functions in genetic recombination as well as in transcriptional and translational control. The sequence is that of Integration host factor subunit alpha from Bartonella bacilliformis (strain ATCC 35685 / KC583 / Herrer 020/F12,63).